A 156-amino-acid polypeptide reads, in one-letter code: ATP synthase subunit b (156 aa).

A helical transmembrane segment spans residues 7–27 (LFAQIIVFFGLVWFTMKFVWP).

It belongs to the ATPase B chain family. As to quaternary structure, F-type ATPases have 2 components, F(1) - the catalytic core - and F(0) - the membrane proton channel. F(1) has five subunits: alpha(3), beta(3), gamma(1), delta(1), epsilon(1). F(0) has three main subunits: a(1), b(2) and c(10-14). The alpha and beta chains form an alternating ring which encloses part of the gamma chain. F(1) is attached to F(0) by a central stalk formed by the gamma and epsilon chains, while a peripheral stalk is formed by the delta and b chains.

The protein resides in the cell inner membrane. Its function is as follows. F(1)F(0) ATP synthase produces ATP from ADP in the presence of a proton or sodium gradient. F-type ATPases consist of two structural domains, F(1) containing the extramembraneous catalytic core and F(0) containing the membrane proton channel, linked together by a central stalk and a peripheral stalk. During catalysis, ATP synthesis in the catalytic domain of F(1) is coupled via a rotary mechanism of the central stalk subunits to proton translocation. Component of the F(0) channel, it forms part of the peripheral stalk, linking F(1) to F(0). The chain is ATP synthase subunit b from Neisseria gonorrhoeae (strain NCCP11945).